Here is a 293-residue protein sequence, read N- to C-terminus: MTGLYELVWRVLHALLCLHRTLTSWLRVRFGTWNWIWRRCCRAASAAVLAPLGFTLRKPPAVGRNRRHHRHPRGGSCLAAAHHRMRWRADGRSLEKLPVHMGLVITEVEQEPSFSDIASLVVWCMAVGISYISVYDHQGIFKRNNSRLMDEILKQQQELLGLDCSKYSPEFANSNDKDDQVLNCHLAVKVLSPEDGKADIVRAAQDFCQLVAQKQKRPTDLDVDTLASLLSSNGCPDPDLVLKFGPVDSTLGFLPWHIRLTEIVSLPSHLNISYEDFFSALRQYAACEQRLGK.

3 helical membrane-spanning segments follow: residues 1-23, 35-56, and 117-135; these read MTGL…RTLT, WIWR…GFTL, and IASL…ISVY. N-linked (GlcNAc...) asparagine glycosylation is found at Asn144 and Asn271. An RXG motif; crucial for prenyltransferase activity motif is present at residues 290–292; sequence RLG. Leu291 and Gly292 together coordinate isopentenyl diphosphate.

The protein belongs to the UPP synthase family. In terms of assembly, the active dehydrodolichyl diphosphate synthase complex is a heterotetramer composed of a dimer of heterodimer of DHDDS and NUS1. Interacts with NPC2. It depends on Mg(2+) as a cofactor.

It localises to the endoplasmic reticulum membrane. The catalysed reaction is n isopentenyl diphosphate + (2E,6E)-farnesyl diphosphate = a di-trans,poly-cis-polyprenyl diphosphate + n diphosphate. It participates in protein modification; protein glycosylation. Its pathway is lipid metabolism. Its activity is regulated as follows. Activated by phospholipids including cardiolipin, phosphatidylcholine, phosphatidylethanolamine, phosphatidylinositol and phosphatidylserine. Functionally, with DHDDS, forms the dehydrodolichyl diphosphate synthase (DDS) complex, an essential component of the dolichol monophosphate (Dol-P) biosynthetic machinery. Both subunits contribute to enzymatic activity, i.e. condensation of multiple copies of isopentenyl pyrophosphate (IPP) to farnesyl pyrophosphate (FPP) to produce dehydrodolichyl diphosphate (Dedol-PP), a precursor of dolichol phosphate which is utilized as a sugar carrier in protein glycosylation in the endoplasmic reticulum (ER). Synthesizes long-chain polyprenols, mostly of C95 and C100 chain length. Regulates the glycosylation and stability of nascent NPC2, thereby promoting trafficking of LDL-derived cholesterol. Acts as a specific receptor for the N-terminus of Nogo-B, a neural and cardiovascular regulator. In Homo sapiens (Human), this protein is Dehydrodolichyl diphosphate synthase complex subunit NUS1.